The sequence spans 249 residues: Uridylate kinase (249 aa).

15-18 (KLSG) contacts ATP. An involved in allosteric activation by GTP region spans residues 23 to 28 (GEEGFG). Gly-57 provides a ligand contact to UMP. 2 residues coordinate ATP: Gly-58 and Arg-62. Residues Asp-77 and 138–145 (TGNPFFTT) each bind UMP. ATP contacts are provided by Thr-165, Phe-171, and Asp-174.

This sequence belongs to the UMP kinase family. As to quaternary structure, homohexamer.

The protein resides in the cytoplasm. The catalysed reaction is UMP + ATP = UDP + ADP. Its pathway is pyrimidine metabolism; CTP biosynthesis via de novo pathway; UDP from UMP (UMPK route): step 1/1. Its activity is regulated as follows. Allosterically activated by GTP. Inhibited by UTP. Functionally, catalyzes the reversible phosphorylation of UMP to UDP. The protein is Uridylate kinase of Psychromonas ingrahamii (strain DSM 17664 / CCUG 51855 / 37).